Consider the following 377-residue polypeptide: MDESFDAFEIKPNSSIIEHFNNHPTCIDKEFNFILQKTELRALETDKFRSALEAKNKLKNRYSNVLPFEETRVKINIDDDDDDEDDNEDDIIVSNNNNNNNNNEKRIKRNSIGSSGQSDVMSNSSDEEDHGGSGDEGTTLSDYINASFINNGTYICTQGPLLNTIVDFWKMIWEQNSNIIVMLTREEENFKTKCDKYWPDKDEERYGNFIVKFDNNITIPDILIRREFTLENLKDNKTRKIYHFQYTTWPDHGTPVSTTGFLKFVSFVDHEKRSGPIVVHCSAGIGRSGTFVAIHSIVAKFAKHYDEKKQAPSINLPKLVVEMRNERPGMVQTRDQYRFCYLAISEAMNTVLKKEQKKRKGLSYSYSSIPLTGPEHD.

Positions 27-347 (IDKEFNFILQ…RFCYLAISEA (321 aa)) constitute a Tyrosine-protein phosphatase domain. The segment at 77 to 137 (IDDDDDDEDD…EDHGGSGDEG (61 aa)) is disordered. Acidic residues predominate over residues 78-91 (DDDDDDEDDNEDDI). The segment covering 92–102 (IVSNNNNNNNN) has biased composition (low complexity). Over residues 113–123 (GSSGQSDVMSN) the composition is skewed to polar residues. Residue cysteine 281 is the Phosphocysteine intermediate of the active site.

It belongs to the protein-tyrosine phosphatase family. Non-receptor class subfamily.

It catalyses the reaction O-phospho-L-tyrosyl-[protein] + H2O = L-tyrosyl-[protein] + phosphate. The sequence is that of Tyrosine-protein phosphatase 2 (ptpB) from Dictyostelium discoideum (Social amoeba).